Consider the following 105-residue polypeptide: U21-theraphotoxin-Cg1a 4 (105 aa).

An N-terminal signal peptide occupies residues M1–A21. Residues E22–E48 constitute a propeptide that is removed on maturation. 3 cysteine pairs are disulfide-bonded: C49–C63, C56–C68, and C62–C76. A Valine amide modification is found at V82. The propeptide occupies G83 to V105.

It belongs to the neurotoxin 10 (Hwtx-1) family. 05 (F4a) subfamily. As to expression, expressed by the venom gland.

Its subcellular location is the secreted. In terms of biological role, probable ion channel inhibitor. The polypeptide is U21-theraphotoxin-Cg1a 4 (Chilobrachys guangxiensis (Chinese earth tiger tarantula)).